A 552-amino-acid polypeptide reads, in one-letter code: Probable bifunctional methylthioribose-1-phosphate isomerase/methylthioribulose-1-phosphate dehydratase (552 aa).

A methylthioribose-1-phosphate isomerase activity region spans residues 1 to 333; sequence MRPIDDSSLT…VVTEHGVVHG (333 aa). Residues 49–51, Arg-91, and Gln-195 each bind substrate; that span reads RGA. Asp-236 acts as the Proton donor in catalysis. Residue 246–247 coordinates substrate; the sequence is NK. The tract at residues 334-535 is methylthioribulose-1-phosphate dehydratase activity; sequence TVAAEPGARI…AVCELVLRTG (202 aa). Zn(2+) contacts are provided by His-427 and His-429.

It in the N-terminal section; belongs to the eIF-2B alpha/beta/delta subunits family. MtnA subfamily. This sequence in the C-terminal section; belongs to the aldolase class II family. MtnB subfamily. Zn(2+) serves as cofactor.

The enzyme catalyses 5-(methylsulfanyl)-alpha-D-ribose 1-phosphate = 5-(methylsulfanyl)-D-ribulose 1-phosphate. The catalysed reaction is 5-(methylsulfanyl)-D-ribulose 1-phosphate = 5-methylsulfanyl-2,3-dioxopentyl phosphate + H2O. Its pathway is amino-acid biosynthesis; L-methionine biosynthesis via salvage pathway; L-methionine from S-methyl-5-thio-alpha-D-ribose 1-phosphate: step 1/6. It participates in amino-acid biosynthesis; L-methionine biosynthesis via salvage pathway; L-methionine from S-methyl-5-thio-alpha-D-ribose 1-phosphate: step 2/6. In terms of biological role, bifunctional protein that catalyzes the interconversion of methylthioribose-1-phosphate (MTR-1-P) into methylthioribulose-1-phosphate (MTRu-1-P), and the dehydration of methylthioribulose-1-phosphate (MTRu-1-P) into 2,3-diketo-5-methylthiopentyl-1-phosphate (DK-MTP-1-P). The sequence is that of Probable bifunctional methylthioribose-1-phosphate isomerase/methylthioribulose-1-phosphate dehydratase (mtnAB) from Nocardia farcinica (strain IFM 10152).